We begin with the raw amino-acid sequence, 232 residues long: Large ribosomal subunit protein uL1 (232 aa).

This sequence belongs to the universal ribosomal protein uL1 family. As to quaternary structure, part of the 50S ribosomal subunit.

Binds directly to 23S rRNA. The L1 stalk is quite mobile in the ribosome, and is involved in E site tRNA release. Functionally, protein L1 is also a translational repressor protein, it controls the translation of the L11 operon by binding to its mRNA. In Aliarcobacter butzleri (strain RM4018) (Arcobacter butzleri), this protein is Large ribosomal subunit protein uL1.